Here is a 520-residue protein sequence, read N- to C-terminus: Beta-galactoside-specific lectin 4 (520 aa).

N-linked (GlcNAc...) asparagine glycosylation is present at asparagine 107. Glutamate 159 is a catalytic residue. A disulfide bridge links cysteine 240 with cysteine 266. Residues 241 to 265 constitute a propeptide, connecting peptide; the sequence is GERPSSSDVRYWPLVIRPVIADDVT. The region spanning 269–396 is the Ricin B-type lectin 1 domain; sequence SEPTVRIVGR…YTLGQGWLAG (128 aa). Residue 284-286 coordinates D-galactose; it reads DVR. An N-linked (GlcNAc...) asparagine glycan is attached at asparagine 322. Cysteine 325 and cysteine 342 are joined by a disulfide. N-linked (GlcNAc...) asparagine glycosylation is found at asparagine 357 and asparagine 397. The Ricin B-type lectin 2 domain occupies 400–520; that stretch reads APREVTIYGF…KPNQMWLPVP (121 aa). Cystine bridges form between cysteine 413–cysteine 426 and cysteine 451–cysteine 467. Position 494–496 (494–496) interacts with D-galactose; sequence DVA.

Belongs to the ribosome-inactivating protein family. Type 2 RIP subfamily. As to quaternary structure, disulfide-linked dimer of A and B chains.

It catalyses the reaction Endohydrolysis of the N-glycosidic bond at one specific adenosine on the 28S rRNA.. In terms of biological role, the A chain is responsible for inhibiting protein synthesis through the catalytic inactivation of 60S ribosomal subunits by removing adenine from position 4,324 of 28S rRNA. The B chain binds to cell receptors and probably facilitates the entry into the cell of the A chain; B chains are also responsible for cell agglutination (lectin activity). Inhibits growth of the human tumor cell line Molt4. The sequence is that of Beta-galactoside-specific lectin 4 from Viscum album (European mistletoe).